The sequence spans 124 residues: Fluoride-specific ion channel FluC (124 aa).

A run of 4 helical transmembrane segments spans residues 3–23 (IIAI…LSIW), 34–54 (YGTL…LVLA), 66–86 (LLIV…SFET), and 100–120 (LYVL…AGVA). Positions 74 and 77 each coordinate Na(+).

This sequence belongs to the fluoride channel Fluc/FEX (TC 1.A.43) family.

Its subcellular location is the cell membrane. It catalyses the reaction fluoride(in) = fluoride(out). Its activity is regulated as follows. Na(+) is not transported, but it plays an essential structural role and its presence is essential for fluoride channel function. In terms of biological role, fluoride-specific ion channel. Important for reducing fluoride concentration in the cell, thus reducing its toxicity. This chain is Fluoride-specific ion channel FluC, found in Roseiflexus sp. (strain RS-1).